The chain runs to 968 residues: Glycine dehydrogenase (decarboxylating) (968 aa).

An N6-(pyridoxal phosphate)lysine modification is found at lysine 712.

The protein belongs to the GcvP family. The glycine cleavage system is composed of four proteins: P, T, L and H. It depends on pyridoxal 5'-phosphate as a cofactor.

The enzyme catalyses N(6)-[(R)-lipoyl]-L-lysyl-[glycine-cleavage complex H protein] + glycine + H(+) = N(6)-[(R)-S(8)-aminomethyldihydrolipoyl]-L-lysyl-[glycine-cleavage complex H protein] + CO2. Functionally, the glycine cleavage system catalyzes the degradation of glycine. The P protein binds the alpha-amino group of glycine through its pyridoxal phosphate cofactor; CO(2) is released and the remaining methylamine moiety is then transferred to the lipoamide cofactor of the H protein. This chain is Glycine dehydrogenase (decarboxylating), found in Prochlorococcus marinus (strain NATL1A).